Here is a 594-residue protein sequence, read N- to C-terminus: MKLLNYALVYRRFLLVVFTILVFLPLPLIIRTKEAQCAYILFVIAIFWITEALPLSITALLPGLMFPMFGIMRSSQVASAYFKDFHLLLIGVICLATSIEKWNLHKRIALRMVMMVGVNPAWLTLGFMSSTAFLSMWLSNTSTAAMVMPIVEAVAQQIISAEAEAEATQMTYFNESAAHGLDIDETVIGQETNEKKEKTKPAPGSSHDKGKVSRKMETEKNAVTGAKYRSRKDHMMCKLMCLSVAYSSTIGGLTTITGTSTNLIFSEHFNTRYPDCRCLNFGSWFLFSFPVALILLLLSWIWLQWLYLGFDFKMFKCGKTKTLKEKACAKVIKQEYEKLGPMRYQEIVTLVIFIVMALLWFSRDPGFVTGWSVLFSEYPGYVTDSTVALVAGILFFLIPAKKVTKMTSAGEIIAFDYTPLITWKEFQSFMPWDIAILVGGGFALADGCQVSGLSNWIGSKLSPLGSLPVWLIILISSLIVTSLTEVASNPATITILFPILSPLAEAIQVNPLQILLPSTLCTSFAFLLPVANPPNAIVFSYGHLKVIDMVKAGLGVNILGVAVVMLGMFTWIEPMFNLHEYPSWASNFVNQTMP.

5 consecutive transmembrane segments (helical) span residues 13–33, 40–60, 77–97, 113–133, and 134–154; these read FLLV…IRTK, ILFV…ITAL, VASA…CLAT, VMMV…STAF, and LSMW…VEAV. N-linked (GlcNAc...) asparagine glycosylation occurs at asparagine 174. Over residues 192–220 the composition is skewed to basic and acidic residues; it reads TNEKKEKTKPAPGSSHDKGKVSRKMETEK. The interval 192–226 is disordered; sequence TNEKKEKTKPAPGSSHDKGKVSRKMETEKNAVTGA. Transmembrane regions (helical) follow at residues 239–259, 283–303, 347–367, 380–400, 461–481, 487–507, 511–531, and 552–572; these read LMCL…ITGT, SWFL…WIWL, IVTL…DPGF, GYVT…LIPA, LSPL…LIVT, ASNP…AEAI, PLQI…LPVA, and AGLG…FTWI. Asparagine 590 is a glycosylation site (N-linked (GlcNAc...) asparagine).

This sequence belongs to the SLC13A/DASS transporter (TC 2.A.47) family. NADC subfamily. As to expression, highly expressed in kidney and ileum, detected at lower levels in duodenum/jejunum and colon, and at very low levels in cecum, testis, adrenal and adipose tissues. In terms of tissue distribution, expressed in the kidney.

The protein resides in the apical cell membrane. The catalysed reaction is sulfate(out) + 3 Na(+)(out) = sulfate(in) + 3 Na(+)(in). The enzyme catalyses selenate(out) + 3 Na(+)(out) = selenate(in) + 3 Na(+)(in). It carries out the reaction thiosulfate(out) + 3 Na(+)(out) = thiosulfate(in) + 3 Na(+)(in). Its function is as follows. Sodium:sulfate symporter that mediates sulfate reabsorption in the kidney and small intestine. Can also mediate the transport of selenate and thiosulfate. This chain is Solute carrier family 13 member 1 (Slc13a1), found in Mus musculus (Mouse).